Here is a 90-residue protein sequence, read N- to C-terminus: U7-theraphotoxin-Hhn1a 6 (90 aa).

An N-terminal signal peptide occupies residues 1–19 (MKTAIFTVVLALAVFAVLS). A propeptide spanning residues 20-50 (FGWEANEKALSEEFTELIHEKEAASEAEARE) is cleaved from the precursor. Cystine bridges form between Cys51–Cys65, Cys58–Cys70, and Cys64–Cys81.

This sequence belongs to the neurotoxin 10 (Hwtx-1) family. 13 (Hntx-13) subfamily. As to expression, expressed by the venom gland.

The protein resides in the secreted. Its function is as follows. Ion channel inhibitor. This chain is U7-theraphotoxin-Hhn1a 6, found in Cyriopagopus hainanus (Chinese bird spider).